A 417-amino-acid polypeptide reads, in one-letter code: Phosphoglycerate kinase 1 (417 aa).

Serine 2 is modified (N-acetylserine). A phosphoserine mark is found at serine 2 and serine 4. The interval 2–186 (SLSNKLTLDK…VGVNLPQKAG (185 aa)) is globular domain-1. N6-succinyllysine is present on lysine 6. Lysine 11 carries the N6-acetyllysine modification. 6 residues coordinate (2R)-3-phosphoglycerate: valine 23, aspartate 24, phenylalanine 25, asparagine 26, glutamine 38, and arginine 39. Residues 38–43 (QRIKAA) form a mitochondrial targeting region exposed following cis-trans isomerization by PIN1 and recognized by the TOM complex for mitochondrial translocation of the protein region. Lysine 48 carries the N6-acetyllysine; alternate modification. N6-succinyllysine; alternate is present on lysine 48. (2R)-3-phosphoglycerate-binding residues include serine 62, histidine 63, glycine 65, and arginine 66. Lysine 75 is subject to N6-acetyllysine. Tyrosine 76 bears the Phosphotyrosine mark. Residues lysine 86 and lysine 91 each carry the N6-acetyllysine modification. Lysine 97 bears the N6-acetyllysine; alternate mark. Residue lysine 97 is modified to N6-(2-hydroxyisobutyryl)lysine; alternate. The (2R)-3-phosphoglycerate site is built by leucine 122 and arginine 123. Lysine 131 carries the N6-acetyllysine; alternate modification. N6-malonyllysine; alternate is present on lysine 131. At lysine 146 the chain carries N6-acetyllysine. Residues histidine 170 and arginine 171 each coordinate (2R)-3-phosphoglycerate. The tract at residues 187–190 (GFLM) is linker. Lysine 191 bears the N6-succinyllysine mark. Positions 191-417 (KKELNYFAKA…LPGVDALSNV (227 aa)) are globular domain-2. The residue at position 196 (tyrosine 196) is a Phosphotyrosine. N6-acetyllysine is present on lysine 199. Serine 203 bears the Phosphoserine mark. Glycine 214 is a binding site for ADP. CDP is bound at residue glycine 214. 2 residues coordinate AMP: alanine 215 and lysine 216. Alanine 215 serves as a coordination point for ATP. Residue alanine 215 participates in Mg(2+) binding. Lysine 216 carries the N6-(2-hydroxyisobutyryl)lysine modification. The Mg(2+) site is built by alanine 218 and aspartate 219. Aspartate 219 serves as a coordination point for CDP. Lysine 220 provides a ligand contact to AMP. Residue lysine 220 participates in ATP binding. Residue lysine 220 is modified to N6-(2-hydroxyisobutyryl)lysine. Glycine 238 lines the ADP pocket. Glycine 238 contacts CDP. Glycine 239 is an AMP binding site. Glycine 239 provides a ligand contact to ATP. N6-acetyllysine is present on residues lysine 267 and lysine 291. Glycine 313 contributes to the AMP binding site. Glycine 313 contacts ATP. An N6-(2-hydroxyisobutyryl)lysine modification is found at lysine 323. Positions 338, 340, and 343 each coordinate CDP. Residue phenylalanine 343 participates in ADP binding. Glutamate 344 is a binding site for AMP. Glutamate 344 is a binding site for ATP. Lysine 361 is modified (N6-acetyllysine). ATP contacts are provided by aspartate 375 and threonine 376. Position 375 (aspartate 375) interacts with Mg(2+). Residues 406 to 417 (KVLPGVDALSNV) form an associated with globular domain 1 region.

This sequence belongs to the phosphoglycerate kinase family. As to quaternary structure, monomer. Interacts with kinase MAPK1/ERK2; the interaction is direct, occurs under hypoxic conditions, and promotes its interaction with PIN1. Interacts with peptidyl-prolyl cis-trans isomerase PIN1; the interaction is direct, occurs under hypoxic conditions, and targets the protein to the mitochondrion by promoting interactions with the TOM complex. Interacts with mitochondrial circRNA mcPGK1 (via its 2nd stem-loop); the interaction is direct and targets the protein to the mitochondrion by promoting interactions with the TOM complex. Interacts with pyruvate dehydrogenase kinase PDK1; the interaction is direct, occurs under hypoxic conditions and leads to PDK1-mediated inhibition of pyruvate dehydrogenase complex activity. The cofactor is Mg(2+). Post-translationally, phosphorylated at Ser-203 by MAPK1/ERK2 under hypoxic conditions, which promotes its mitochondrial targeting.

The protein resides in the cytoplasm. The protein localises to the cytosol. Its subcellular location is the mitochondrion matrix. The enzyme catalyses (2R)-3-phosphoglycerate + ATP = (2R)-3-phospho-glyceroyl phosphate + ADP. It catalyses the reaction L-seryl-[protein] + ATP = O-phospho-L-seryl-[protein] + ADP + H(+). It participates in carbohydrate degradation; glycolysis; pyruvate from D-glyceraldehyde 3-phosphate: step 2/5. In terms of biological role, catalyzes one of the two ATP producing reactions in the glycolytic pathway via the reversible conversion of 1,3-diphosphoglycerate to 3-phosphoglycerate. Both L- and D- forms of purine and pyrimidine nucleotides can be used as substrates, but the activity is much lower on pyrimidines. In addition to its role as a glycolytic enzyme, it seems that PGK-1 acts as a polymerase alpha cofactor protein (primer recognition protein). Acts as a protein kinase when localized to the mitochondrion where it phosphorylates pyruvate dehydrogenase kinase PDK1 to inhibit pyruvate dehydrogenase complex activity and suppress the formation of acetyl-coenzyme A from pyruvate, and consequently inhibit oxidative phosphorylation and promote glycolysis. May play a role in sperm motility. This Equus caballus (Horse) protein is Phosphoglycerate kinase 1 (PGK1).